We begin with the raw amino-acid sequence, 97 residues long: Ferredoxin-like protein YdiT (97 aa).

It belongs to the bacterial-type ferredoxin family. FixX subfamily.

Functionally, could be a 3Fe-4S cluster-containing protein. Probably participates in a redox process with YdiQ, YdiR and YdiS. The polypeptide is Ferredoxin-like protein YdiT (ydiT) (Escherichia coli (strain K12)).